The primary structure comprises 161 residues: Insulin-like growth factor 1, juvenile form (161 aa).

Residues 45–73 (GPETLCGAELVDTLQFVCGDRGFYFSKPT) form a b region. Disulfide bonds link Cys-50-Cys-92, Cys-62-Cys-105, and Cys-91-Cys-96. The c stretch occupies residues 74–85 (GYGPSSRRSHNR). The segment at 86 to 106 (GIVDECCFQSCELRRLEMYCA) is a. The tract at residues 107–114 (PVKPGKTP) is d. Residues 111-161 (GKTPRSVRAQRHTDSPRTAKKPLPGQSHSSYKEVHQKNSSRGNTGGRNYRI) form a disordered region. Positions 115–161 (RSVRAQRHTDSPRTAKKPLPGQSHSSYKEVHQKNSSRGNTGGRNYRI) are cleaved as a propeptide — e peptide.

The protein belongs to the insulin family.

It localises to the secreted. The insulin-like growth factors, isolated from plasma, are structurally and functionally related to insulin but have a much higher growth-promoting activity. Acts as a ligand for IGF1R. Binds to the alpha subunit of IGF1R, leading to the activation of the intrinsic tyrosine kinase activity which autophosphorylates tyrosine residues in the beta subunit thus initiatiating a cascade of down-stream signaling events leading to activation of the PI3K-AKT/PKB and the Ras-MAPK pathways. Binds to integrins. Its binding to integrins and subsequent ternary complex formation with integrins and IGFR1 are essential for IGF1 signaling. This chain is Insulin-like growth factor 1, juvenile form, found in Cyprinus carpio (Common carp).